The following is a 387-amino-acid chain: Galactokinase (387 aa).

Glu-33 to Asp-36 is a binding site for substrate. ATP is bound by residues Ser-67 and Gly-123–Ser-129. Ser-129 and Glu-161 together coordinate Mg(2+). Asp-173 acts as the Proton acceptor in catalysis. Tyr-223 contributes to the substrate binding site.

This sequence belongs to the GHMP kinase family. GalK subfamily.

The protein localises to the cytoplasm. It carries out the reaction alpha-D-galactose + ATP = alpha-D-galactose 1-phosphate + ADP + H(+). It functions in the pathway carbohydrate metabolism; galactose metabolism. Catalyzes the transfer of the gamma-phosphate of ATP to D-galactose to form alpha-D-galactose-1-phosphate (Gal-1-P). The sequence is that of Galactokinase from Lacticaseibacillus casei (Lactobacillus casei).